The primary structure comprises 305 residues: 2-aminophenol 1,6-dioxygenase beta subunit (305 aa).

3 residues coordinate Fe cation: histidine 14, histidine 63, and histidine 196.

This sequence belongs to the LigB/MhpB extradiol dioxygenase family. Heterotetramer of 2 alpha and 2 beta subunits. Fe(2+) is required as a cofactor.

It catalyses the reaction 2-aminophenol + O2 = 2-aminomuconate 6-semialdehyde. Strongly inhibited by CuSO(4), FeCl(3), K(3)[Fe(CN)(6)], AgNO3, HgCl(2) and MnCl(2). In terms of biological role, component of the 2-aminophenol 1,6-dioxygenase complex that catalyzes the ring fission of 2-aminophenol to produce 2-aminomuconic 6-semialdehyde. AmnB seems to be the catalytic subunit of the complex. The enzyme is also active toward 2-amino-p-cresol, 6-amino-m-cresol, 2-amino-m-cresol, 2-amino-4,5-dimethylphenol, 2-amino-4-chlorophenol, and catechol. The chain is 2-aminophenol 1,6-dioxygenase beta subunit (amnB) from Pseudomonas sp.